A 253-amino-acid polypeptide reads, in one-letter code: Tryptophan synthase alpha chain (253 aa).

Active-site proton acceptor residues include Glu-48 and Asp-59.

It belongs to the TrpA family. Tetramer of two alpha and two beta chains.

It catalyses the reaction (1S,2R)-1-C-(indol-3-yl)glycerol 3-phosphate + L-serine = D-glyceraldehyde 3-phosphate + L-tryptophan + H2O. It functions in the pathway amino-acid biosynthesis; L-tryptophan biosynthesis; L-tryptophan from chorismate: step 5/5. The alpha subunit is responsible for the aldol cleavage of indoleglycerol phosphate to indole and glyceraldehyde 3-phosphate. This is Tryptophan synthase alpha chain from Caldicellulosiruptor saccharolyticus (strain ATCC 43494 / DSM 8903 / Tp8T 6331).